We begin with the raw amino-acid sequence, 675 residues long: DNA ligase (675 aa).

Residues 41–45 (DAEYD), 90–91 (SL), and Glu120 contribute to the NAD(+) site. Lys122 acts as the N6-AMP-lysine intermediate in catalysis. NAD(+) contacts are provided by Arg143, Glu178, Lys295, and Lys319. Zn(2+)-binding residues include Cys413, Cys416, Cys431, and Cys436. The BRCT domain maps to 596–675 (GVPQTFAGKT…ADFLQLIDRV (80 aa)).

It belongs to the NAD-dependent DNA ligase family. LigA subfamily. The cofactor is Mg(2+). Mn(2+) is required as a cofactor.

It carries out the reaction NAD(+) + (deoxyribonucleotide)n-3'-hydroxyl + 5'-phospho-(deoxyribonucleotide)m = (deoxyribonucleotide)n+m + AMP + beta-nicotinamide D-nucleotide.. In terms of biological role, DNA ligase that catalyzes the formation of phosphodiester linkages between 5'-phosphoryl and 3'-hydroxyl groups in double-stranded DNA using NAD as a coenzyme and as the energy source for the reaction. It is essential for DNA replication and repair of damaged DNA. This Heliobacterium modesticaldum (strain ATCC 51547 / Ice1) protein is DNA ligase.